Reading from the N-terminus, the 198-residue chain is Transcription factor FapR (198 aa).

The region spanning 102–167 (TRIARGHHLF…HGRTIVEVNS (66 aa)) is the MaoC-like domain.

The protein belongs to the FapR family.

Transcriptional factor involved in regulation of membrane lipid biosynthesis by repressing genes involved in fatty acid and phospholipid metabolism. The protein is Transcription factor FapR of Geobacillus kaustophilus (strain HTA426).